The chain runs to 275 residues: Undecaprenyl-diphosphatase (275 aa).

A run of 8 helical transmembrane segments spans residues Leu2–Ile22, Phe43–Tyr63, Trp83–Leu103, Met111–Leu131, Val161–Ile181, Tyr186–Leu206, Ile225–Leu245, and Pro255–Ala275.

The protein belongs to the UppP family.

It is found in the cell membrane. The catalysed reaction is di-trans,octa-cis-undecaprenyl diphosphate + H2O = di-trans,octa-cis-undecaprenyl phosphate + phosphate + H(+). Catalyzes the dephosphorylation of undecaprenyl diphosphate (UPP). Confers resistance to bacitracin. This is Undecaprenyl-diphosphatase from Lactobacillus delbrueckii subsp. bulgaricus (strain ATCC 11842 / DSM 20081 / BCRC 10696 / JCM 1002 / NBRC 13953 / NCIMB 11778 / NCTC 12712 / WDCM 00102 / Lb 14).